The sequence spans 27 residues: Delta-actitoxin-Avd2a (27 aa).

3 disulfide bridges follow: cysteine 3–cysteine 17, cysteine 4–cysteine 11, and cysteine 6–cysteine 22.

This sequence belongs to the sea anemone short toxin (type III) family.

The protein localises to the secreted. It localises to the nematocyst. Its function is as follows. Specific arthropod (crab and insect) toxin that inhibits inactivation of voltage-gated sodium channels. It competes well with the site-3 toxin LqhalphaIT (from the scorpion L.quinquestriatus (AC P17728)) on binding to cockroach neuronal membranes (Ki=21.4 nM), and inhibits the inactivation of D.melanogaster channel (DmNav1), but not that of mammalian Navs expressed in Xenopus oocytes. Its activity is synergically enhanced by ligands of receptor site-4 (Bj-xtrIT (AC P56637)). Its ability to inhibit the channel mutant DmNav1[D1701R] only decreases 5-fold, whereas the inhibition activity is completely lost by LqhalphaIT and Av2 when tested on DmNav1[D1701R]. This Anemonia sulcata (Mediterranean snakelocks sea anemone) protein is Delta-actitoxin-Avd2a.